The primary structure comprises 214 residues: Probable transaldolase (214 aa).

K83 functions as the Schiff-base intermediate with substrate in the catalytic mechanism.

This sequence belongs to the transaldolase family. Type 3B subfamily.

It is found in the cytoplasm. The catalysed reaction is D-sedoheptulose 7-phosphate + D-glyceraldehyde 3-phosphate = D-erythrose 4-phosphate + beta-D-fructose 6-phosphate. It functions in the pathway carbohydrate degradation; pentose phosphate pathway; D-glyceraldehyde 3-phosphate and beta-D-fructose 6-phosphate from D-ribose 5-phosphate and D-xylulose 5-phosphate (non-oxidative stage): step 2/3. Functionally, transaldolase is important for the balance of metabolites in the pentose-phosphate pathway. The sequence is that of Probable transaldolase from Leptospira interrogans serogroup Icterohaemorrhagiae serovar copenhageni (strain Fiocruz L1-130).